Here is a 1321-residue protein sequence, read N- to C-terminus: Bile salt export pump (1321 aa).

At 1 to 62 (MSDSVILRSI…FSSSTDIWLM (62 aa)) the chain is on the cytoplasmic side. The tract at residues 16–37 (ENDGFESDKSYNNDKKSRLQDE) is disordered. The segment covering 21–37 (ESDKSYNNDKKSRLQDE) has biased composition (basic and acidic residues). An ABC transmembrane type-1 1 domain is found at 62 to 385 (MFVGSLCAFL…ASPCLEAFAT (324 aa)). Residues 63-83 (FVGSLCAFLHGIAQPGVLLIF) traverse the membrane as a helical segment. Residues 84–147 (GTMTDVFIDY…MIKFASYYAG (64 aa)) lie on the Extracellular side of the membrane. 4 N-linked (GlcNAc...) asparagine glycosylation sites follow: N109, N116, N122, and N125. A helical transmembrane segment spans residues 148–168 (IAVAVLITGYIQICFWVIAAA). The Cytoplasmic portion of the chain corresponds to 169 to 215 (RQIQKMRKFYFRRIMRMEIGWFDCNSVGELNTRFSDDINKINDAIAD). Residues 216 to 236 (QMALFIQRMTSTICGFLLGFF) traverse the membrane as a helical segment. The Extracellular portion of the chain corresponds to 237–240 (RGWK). The chain crosses the membrane as a helical span at residues 241–261 (LTLVIISVSPLIGIGAATIGL). The Cytoplasmic portion of the chain corresponds to 262–319 (SVSKFTDYELKAYAKAGVVADEVISSMRTVAAFGGEKREVERYEKNLVFAQRWGIRKG). A helical transmembrane segment spans residues 320–340 (IVMGFFTGFVWCLIFLCYALA). Over 341-353 (FWYGSTLVLDEGE) the chain is Extracellular. A helical transmembrane segment spans residues 354 to 374 (YTPGTLVQIFLSVIVGALNLG). Over 375 to 755 (NASPCLEAFA…KFSAPEWPYM (381 aa)) the chain is Cytoplasmic. One can recognise an ABC transporter 1 domain in the interval 420–656 (IEFHNVTFHY…KGVYFTLVTL (237 aa)). 455–462 (GPSGAGKS) contributes to the ATP binding site. Residue T586 is modified to Phosphothreonine. The residue at position 587 (S587) is a Phosphoserine. Residues 651-672 (FTLVTLQSQGNQALNEEDIKDA) form an interaction with HAX1 region. A phosphoserine mark is found at S690, S701, and S704. Residues 755–1043 (MLVGSVGAAV…AFSYTPSYAK (289 aa)) form the ABC transmembrane type-1 2 domain. Residues 756–776 (LVGSVGAAVNGTVTPLYAFLF) form a helical membrane-spanning segment. The Extracellular portion of the chain corresponds to 777 to 794 (SQILGTFSIPDKEEQRSQ). A helical transmembrane segment spans residues 795 to 815 (INGVCLLFVAMGCVSLFTQFL). Topologically, residues 816-869 (QGYAFAKSGELLTKRLRKFGFRAMLGQDIAWFDDLRNSPGALTTRLATDASQVQ) are cytoplasmic. The next 2 helical transmembrane spans lie at 870–890 (GAAG…TVAM) and 891–911 (IIAF…FPFL). The Cytoplasmic portion of the chain corresponds to 912–979 (ALSGATQTRM…PFKTAIQKAN (68 aa)). The helical transmembrane segment at 980 to 1000 (IYGFCFAFAQCIMFIANSASY) threads the bilayer. The Extracellular segment spans residues 1001–1011 (RYGGYLISNEG). A helical membrane pass occupies residues 1012 to 1032 (LHFSYVFRVISAVVLSATALG). At 1033–1321 (RAFSYTPSYA…KLVTTGSPIS (289 aa)) the chain is on the cytoplasmic side. The region spanning 1078-1316 (IDFVDCKFTY…KGAYYKLVTT (239 aa)) is the ABC transporter 2 domain. ATP is bound at residue 1113-1120 (GSSGCGKS). S1214 carries the phosphoserine modification. Positions 1311 to 1314 (YKLV) are mediates internalization from the plasma membrane. The residue at position 1321 (S1321) is a Phosphoserine.

This sequence belongs to the ABC transporter superfamily. ABCB family. Multidrug resistance exporter (TC 3.A.1.201) subfamily. As to quaternary structure, interacts with HAX1. Interacts with the adapter protein complex 2 (AP-2) throught AP2A2 or AP2A1; this interaction regulates cell membrane expression of ABCB11 through its internalization in a clathrin-dependent manner and its subsequent degradation. Post-translationally, N-glycosylated. Ubiquitinated; short-chain ubiquitination regulates cell-Surface expression of ABCB11. In terms of tissue distribution, expressed predominantly, if not exclusively in the liver, where it was further localized to the canalicular microvilli and to subcanalicular vesicles of the hepatocytes by in situ.

Its subcellular location is the apical cell membrane. It localises to the recycling endosome membrane. It is found in the endosome. The protein resides in the cell membrane. It catalyses the reaction cholate(in) + ATP + H2O = cholate(out) + ADP + phosphate + H(+). The catalysed reaction is taurocholate(in) + ATP + H2O = taurocholate(out) + ADP + phosphate + H(+). It carries out the reaction glycocholate(in) + ATP + H2O = glycocholate(out) + ADP + phosphate + H(+). The enzyme catalyses glycochenodeoxycholate(in) + ATP + H2O = glycochenodeoxycholate(out) + ADP + phosphate + H(+). It catalyses the reaction taurochenodeoxycholate(in) + ATP + H2O = taurochenodeoxycholate(out) + ADP + phosphate + H(+). The catalysed reaction is glycoursodeoxycholate(in) + ATP + H2O = glycoursodeoxycholate(out) + ADP + phosphate + H(+). It carries out the reaction tauroursodeoxycholate(in) + ATP + H2O = tauroursodeoxycholate(out) + ADP + phosphate + H(+). The enzyme catalyses taurodeoxycholate(in) + ATP + H2O = taurodeoxycholate(out) + ADP + phosphate + H(+). It catalyses the reaction taurolithocholate 3-sulfate(in) + ATP + H2O = taurolithocholate 3-sulfate(out) + ADP + phosphate + H(+). The catalysed reaction is pravastatin(in) + ATP + H2O = pravastatin(out) + ADP + phosphate + H(+). Its activity is regulated as follows. The uptake of taurocholate is inhibited by taurolithocholate sulfate with an IC(50) of 9 uM. Pravastatin competitively inhibits the transport of taurocholic acid. Cyclosporin A, glibenclamide, rifampicin and troglitazonestrongly competitively inhibit the transport activity of taurocholate. The canalicular transport activity of taurocholate is strongly dependent on canalicular membrane cholesterol content. The uptake of taurocholate is increased by short- and medium-chain fatty acids. Cholesterol increases transport capacity of taurocholate without affecting the affinity for the substrate. Functionally, catalyzes the transport of the major hydrophobic bile salts, such as taurine and glycine-conjugated cholic acid across the canalicular membrane of hepatocytes in an ATP-dependent manner, therefore participates in hepatic bile acid homeostasis and consequently to lipid homeostasis through regulation of biliary lipid secretion in a bile salts dependent manner. Transports taurine-conjugated bile salts more rapidly than glycine-conjugated bile salts. Also transports non-bile acid compounds, such as pravastatin and fexofenadine in an ATP-dependent manner and may be involved in their biliary excretion. The protein is Bile salt export pump of Homo sapiens (Human).